We begin with the raw amino-acid sequence, 315 residues long: 4-hydroxy-3-methylbut-2-enyl diphosphate reductase (315 aa).

Cys-12 lines the [4Fe-4S] cluster pocket. (2E)-4-hydroxy-3-methylbut-2-enyl diphosphate contacts are provided by His-41 and His-74. His-41 and His-74 together coordinate dimethylallyl diphosphate. His-41 and His-74 together coordinate isopentenyl diphosphate. A [4Fe-4S] cluster-binding site is contributed by Cys-96. Residue His-124 participates in (2E)-4-hydroxy-3-methylbut-2-enyl diphosphate binding. Residue His-124 coordinates dimethylallyl diphosphate. His-124 contacts isopentenyl diphosphate. Catalysis depends on Glu-126, which acts as the Proton donor. Thr-168 is a binding site for (2E)-4-hydroxy-3-methylbut-2-enyl diphosphate. [4Fe-4S] cluster is bound at residue Cys-198. Residues Ser-226, Ser-227, Asn-228, and Ser-270 each coordinate (2E)-4-hydroxy-3-methylbut-2-enyl diphosphate. 4 residues coordinate dimethylallyl diphosphate: Ser-226, Ser-227, Asn-228, and Ser-270. Residues Ser-226, Ser-227, Asn-228, and Ser-270 each coordinate isopentenyl diphosphate.

The protein belongs to the IspH family. [4Fe-4S] cluster is required as a cofactor.

The enzyme catalyses isopentenyl diphosphate + 2 oxidized [2Fe-2S]-[ferredoxin] + H2O = (2E)-4-hydroxy-3-methylbut-2-enyl diphosphate + 2 reduced [2Fe-2S]-[ferredoxin] + 2 H(+). It catalyses the reaction dimethylallyl diphosphate + 2 oxidized [2Fe-2S]-[ferredoxin] + H2O = (2E)-4-hydroxy-3-methylbut-2-enyl diphosphate + 2 reduced [2Fe-2S]-[ferredoxin] + 2 H(+). Its pathway is isoprenoid biosynthesis; dimethylallyl diphosphate biosynthesis; dimethylallyl diphosphate from (2E)-4-hydroxy-3-methylbutenyl diphosphate: step 1/1. It participates in isoprenoid biosynthesis; isopentenyl diphosphate biosynthesis via DXP pathway; isopentenyl diphosphate from 1-deoxy-D-xylulose 5-phosphate: step 6/6. In terms of biological role, catalyzes the conversion of 1-hydroxy-2-methyl-2-(E)-butenyl 4-diphosphate (HMBPP) into a mixture of isopentenyl diphosphate (IPP) and dimethylallyl diphosphate (DMAPP). Acts in the terminal step of the DOXP/MEP pathway for isoprenoid precursor biosynthesis. The polypeptide is 4-hydroxy-3-methylbut-2-enyl diphosphate reductase (Pseudomonas syringae pv. syringae (strain B728a)).